Reading from the N-terminus, the 237-residue chain is Probable GTP-binding protein EngB (237 aa).

Positions 23–209 (AVPEVAFAGR…QAVIAGWLNL (187 aa)) constitute an EngB-type G domain. Residues 31–38 (GRSNAGKS), 58–62 (GRTQH), 82–85 (DLPG), 149–152 (TKAD), and 187–190 (LFSS) contribute to the GTP site. Mg(2+) contacts are provided by Ser-38 and Thr-60. The segment at 214–237 (KAEREPAAANSVPPAVPPASDPAA) is disordered. Over residues 227-237 (PAVPPASDPAA) the composition is skewed to pro residues.

It belongs to the TRAFAC class TrmE-Era-EngA-EngB-Septin-like GTPase superfamily. EngB GTPase family. Mg(2+) serves as cofactor.

Necessary for normal cell division and for the maintenance of normal septation. The polypeptide is Probable GTP-binding protein EngB (Cupriavidus taiwanensis (strain DSM 17343 / BCRC 17206 / CCUG 44338 / CIP 107171 / LMG 19424 / R1) (Ralstonia taiwanensis (strain LMG 19424))).